Consider the following 186-residue polypeptide: ATP synthase subunit b (186 aa).

A helical transmembrane segment spans residues 25–45 (IVWSVVCVAIIAVVFYKYVIP).

It belongs to the ATPase B chain family. In terms of assembly, F-type ATPases have 2 components, F(1) - the catalytic core - and F(0) - the membrane proton channel. F(1) has five subunits: alpha(3), beta(3), gamma(1), delta(1), epsilon(1). F(0) has three main subunits: a(1), b(2) and c(10-14). The alpha and beta chains form an alternating ring which encloses part of the gamma chain. F(1) is attached to F(0) by a central stalk formed by the gamma and epsilon chains, while a peripheral stalk is formed by the delta and b chains.

The protein localises to the cell membrane. F(1)F(0) ATP synthase produces ATP from ADP in the presence of a proton or sodium gradient. F-type ATPases consist of two structural domains, F(1) containing the extramembraneous catalytic core and F(0) containing the membrane proton channel, linked together by a central stalk and a peripheral stalk. During catalysis, ATP synthesis in the catalytic domain of F(1) is coupled via a rotary mechanism of the central stalk subunits to proton translocation. In terms of biological role, component of the F(0) channel, it forms part of the peripheral stalk, linking F(1) to F(0). This Nocardia farcinica (strain IFM 10152) protein is ATP synthase subunit b.